Here is a 115-residue protein sequence, read N- to C-terminus: Large ribosomal subunit protein bL19 (115 aa).

The protein belongs to the bacterial ribosomal protein bL19 family.

Its function is as follows. This protein is located at the 30S-50S ribosomal subunit interface and may play a role in the structure and function of the aminoacyl-tRNA binding site. This Sodalis glossinidius (strain morsitans) protein is Large ribosomal subunit protein bL19.